Here is a 234-residue protein sequence, read N- to C-terminus: Flagellar L-ring protein (234 aa).

Residues 1–15 form the signal peptide; sequence MRYAVICMLLLAASG. C16 carries N-palmitoyl cysteine lipidation. C16 is lipidated: S-diacylglycerol cysteine.

Belongs to the FlgH family. The basal body constitutes a major portion of the flagellar organelle and consists of four rings (L,P,S, and M) mounted on a central rod.

Its subcellular location is the cell outer membrane. It is found in the bacterial flagellum basal body. Its function is as follows. Assembles around the rod to form the L-ring and probably protects the motor/basal body from shearing forces during rotation. This Oleidesulfovibrio alaskensis (strain ATCC BAA-1058 / DSM 17464 / G20) (Desulfovibrio alaskensis) protein is Flagellar L-ring protein.